We begin with the raw amino-acid sequence, 106 residues long: Large ribosomal subunit protein eL30 (106 aa).

The protein belongs to the eukaryotic ribosomal protein eL30 family.

The chain is Large ribosomal subunit protein eL30 (rpl30e) from Sulfurisphaera tokodaii (strain DSM 16993 / JCM 10545 / NBRC 100140 / 7) (Sulfolobus tokodaii).